A 234-amino-acid polypeptide reads, in one-letter code: Small ribosomal subunit protein eS4 (234 aa).

Residues 37-99 (VPLLIVLRDV…REEYYRVFPG (63 aa)) form the S4 RNA-binding domain.

It belongs to the eukaryotic ribosomal protein eS4 family.

The protein is Small ribosomal subunit protein eS4 (rps4e) of Haloarcula marismortui (strain ATCC 43049 / DSM 3752 / JCM 8966 / VKM B-1809) (Halobacterium marismortui).